The chain runs to 1403 residues: Baculoviral IAP repeat-containing protein 1a (1403 aa).

3 BIR repeats span residues Arg-63–Gln-128, Arg-162–Gln-228, and Arg-281–Gln-346. Zn(2+)-binding residues include Cys-315, Cys-318, His-335, and Cys-342. In terms of domain architecture, NACHT spans Ser-464–Glu-758. Lys-476 is a binding site for ATP.

Interacts (via NACHT domain) with APAF1 (via CARD and NACHT domains).

Anti-apoptotic protein which acts by inhibiting the activities of CASP3, CASP7 and CASP9. Can inhibit the autocleavage of pro-CASP9 and cleavage of pro-CASP3 by CASP9. Capable of inhibiting CASP9 autoproteolysis at 'Asp-315' and decreasing the rate of auto proteolysis at 'Asp-330'. Acts as a mediator of neuronal survival in pathological conditions. Prevents motor-neuron apoptosis induced by a variety of signals. The sequence is that of Baculoviral IAP repeat-containing protein 1a (Naip1) from Mus musculus (Mouse).